We begin with the raw amino-acid sequence, 342 residues long: Uroporphyrinogen decarboxylase (342 aa).

Residues 22–26 (RQAGR), Phe-41, Asp-72, Tyr-146, Ser-201, and His-317 contribute to the substrate site.

Belongs to the uroporphyrinogen decarboxylase family. As to quaternary structure, homodimer.

The protein localises to the cytoplasm. The enzyme catalyses uroporphyrinogen III + 4 H(+) = coproporphyrinogen III + 4 CO2. It functions in the pathway porphyrin-containing compound metabolism; protoporphyrin-IX biosynthesis; coproporphyrinogen-III from 5-aminolevulinate: step 4/4. Catalyzes the decarboxylation of four acetate groups of uroporphyrinogen-III to yield coproporphyrinogen-III. In Orientia tsutsugamushi (strain Boryong) (Rickettsia tsutsugamushi), this protein is Uroporphyrinogen decarboxylase.